Consider the following 494-residue polypeptide: 4-trimethylaminobutyraldehyde dehydrogenase (494 aa).

Ser-2 carries the post-translational modification N-acetylserine. Residue Lys-30 is modified to N6-acetyllysine; alternate. The residue at position 30 (Lys-30) is an N6-succinyllysine; alternate. At Lys-59 the chain carries N6-succinyllysine. NAD(+) contacts are provided by residues Lys-180 and 232 to 236 (GSVPT). Catalysis depends on Glu-254, which acts as the Proton acceptor. Cys-288 acts as the Nucleophile in catalysis. Residue Lys-298 is modified to N6-acetyllysine. Lys-303 is modified (N6-acetyllysine; alternate). Lys-303 bears the N6-succinyllysine; alternate mark. Position 344 is an N6-acetyllysine (Lys-344). Glu-391 contributes to the NAD(+) binding site.

This sequence belongs to the aldehyde dehydrogenase family. In terms of assembly, homotetramer.

It is found in the cytoplasm. It localises to the cytosol. The catalysed reaction is 4-(trimethylamino)butanal + NAD(+) + H2O = 4-(trimethylamino)butanoate + NADH + 2 H(+). The enzyme catalyses an aldehyde + NAD(+) + H2O = a carboxylate + NADH + 2 H(+). It catalyses the reaction 4-aminobutanal + NAD(+) + H2O = 4-aminobutanoate + NADH + 2 H(+). It carries out the reaction formaldehyde + NAD(+) + H2O = formate + NADH + 2 H(+). The catalysed reaction is acetaldehyde + NAD(+) + H2O = acetate + NADH + 2 H(+). The enzyme catalyses imidazole-4-acetaldehyde + NAD(+) + H2O = imidazole-4-acetate + NADH + 2 H(+). It catalyses the reaction acrolein + NAD(+) + H2O = acrylate + NADH + 2 H(+). It carries out the reaction (5-hydroxyindol-3-yl)acetaldehyde + NAD(+) + H2O = (5-hydroxyindol-3-yl)acetate + NADH + 2 H(+). The catalysed reaction is 3,4-dihydroxyphenylacetaldehyde + NAD(+) + H2O = 3,4-dihydroxyphenylacetate + NADH + 2 H(+). The enzyme catalyses spermine monoaldehyde + NAD(+) + H2O = N-(2-carboxyethyl)spermidine + NADH + 2 H(+). It catalyses the reaction propanal + NAD(+) + H2O = propanoate + NADH + 2 H(+). It carries out the reaction butanal + NAD(+) + H2O = butanoate + NADH + 2 H(+). The catalysed reaction is pentanal + NAD(+) + H2O = pentanoate + NADH + 2 H(+). The enzyme catalyses hexanal + NAD(+) + H2O = hexanoate + NADH + 2 H(+). It functions in the pathway amine and polyamine biosynthesis; carnitine biosynthesis. Functionally, converts gamma-trimethylaminobutyraldehyde into gamma-butyrobetaine with high efficiency (in vitro). Can catalyze the irreversible oxidation of a broad range of aldehydes to the corresponding acids in an NAD-dependent reaction, but with low efficiency. Catalyzes the oxidation of aldehydes arising from biogenic amines and polyamines. The sequence is that of 4-trimethylaminobutyraldehyde dehydrogenase from Mus musculus (Mouse).